A 480-amino-acid chain; its full sequence is Glycogen synthase (480 aa).

K15 serves as a coordination point for ADP-alpha-D-glucose.

This sequence belongs to the glycosyltransferase 1 family. Bacterial/plant glycogen synthase subfamily.

The enzyme catalyses [(1-&gt;4)-alpha-D-glucosyl](n) + ADP-alpha-D-glucose = [(1-&gt;4)-alpha-D-glucosyl](n+1) + ADP + H(+). The protein operates within glycan biosynthesis; glycogen biosynthesis. Its function is as follows. Synthesizes alpha-1,4-glucan chains using ADP-glucose. The chain is Glycogen synthase from Pasteurella multocida (strain Pm70).